The sequence spans 512 residues: Oryzalexin E synthase (512 aa).

Residues 6–26 traverse the membrane as a helical segment; that stretch reads SELWMTAVATCMSLLLYLTIL. Heme is bound at residue Cys452.

This sequence belongs to the cytochrome P450 family. Requires heme as cofactor.

The protein localises to the membrane. The catalysed reaction is ent-sandaracopimaradien-3beta-ol + reduced [NADPH--hemoprotein reductase] + O2 = oryzalexin E + oxidized [NADPH--hemoprotein reductase] + H2O + H(+). In terms of biological role, enzyme of the diterpenoid metabolism involved in the biosynthesis of the oryzalexin class of phytoalexins. Can use ent-sandaracopimaradien and syn-stemodene as substrates, but no activity with syn-stemoden-19-oic acid. Hydroxylates 3-alpha-hydroxy-ent-sandaracopimaradiene at C-9-beta, resulting in a 3-alpha,9-beta-diol corresponding to oryzalexins E. This is Oryzalexin E synthase from Oryza sativa subsp. japonica (Rice).